Here is a 159-residue protein sequence, read N- to C-terminus: Probable cyclic pyranopterin monophosphate synthase (159 aa).

Residues 75 to 77 (LCH) and 111 to 112 (ME) each bind substrate. Asp126 is a catalytic residue.

This sequence belongs to the MoaC family. As to quaternary structure, homohexamer; trimer of dimers.

It catalyses the reaction (8S)-3',8-cyclo-7,8-dihydroguanosine 5'-triphosphate = cyclic pyranopterin phosphate + diphosphate. The protein operates within cofactor biosynthesis; molybdopterin biosynthesis. In terms of biological role, catalyzes the conversion of (8S)-3',8-cyclo-7,8-dihydroguanosine 5'-triphosphate to cyclic pyranopterin monophosphate (cPMP). In Pyrococcus horikoshii (strain ATCC 700860 / DSM 12428 / JCM 9974 / NBRC 100139 / OT-3), this protein is Probable cyclic pyranopterin monophosphate synthase.